Reading from the N-terminus, the 474-residue chain is Coiled-coil domain-containing protein 6 (474 aa).

Positions 1–10 (MADSASESDT) are enriched in acidic residues. The disordered stretch occupies residues 1–47 (MADSASESDTDGAGGNSSSSAAMQSSCSSTSGGGGGGGGGGGGGKSG). Ala2 carries the N-acetylalanine modification. Positions 16 to 30 (NSSSSAAMQSSCSST) are enriched in low complexity. The segment covering 31-47 (SGGGGGGGGGGGGGKSG) has biased composition (gly residues). Ser52 carries the phosphoserine modification. Residues 53 to 237 (PFRLEELTNR…KRILQEKLDQ (185 aa)) adopt a coiled-coil conformation. Repeat copies occupy residues 106 to 134 (EQEE…AVNY), 135 to 163 (EKEE…EQHL), and 164 to 192 (EQEQ…QLTL). Positions 106-235 (EQEEEFISNT…AEKRILQEKL (130 aa)) are 5 X 29 AA tandem repeats. The 4; approximate repeat unit spans residues 193–206 (EQLRREKIDLENTL). Residues 207-235 (EQEQEALVNRLWKRMDKLEAEKRILQEKL) form repeat 5. Ser240, Ser244, Ser249, Ser254, Ser284, and Ser323 each carry phosphoserine. Residues 253–332 (DSPENMMRHI…SESESSLEMD (80 aa)) are a coiled coil. Residues 342–369 (AQGLRPRTVSSPIPYTPSPSSSRPISPG) are disordered. Thr349 bears the Phosphothreonine mark. A compositionally biased stretch (low complexity) spans 351-368 (SSPIPYTPSPSSSRPISP). Residues Ser363 and Ser367 each carry the phosphoserine modification. Arg387 carries the post-translational modification Omega-N-methylarginine. Residues Ser395 and Ser413 each carry the phosphoserine modification. The tract at residues 397 to 474 (GLHVQHMGTS…QHSAHPSSQP (78 aa)) is disordered. The span at 426–451 (PTPPPSPNTQTPVQPPPPPPPPPMQP) shows a compositional bias: pro residues. The short motif at 442–451 (PPPPPPPMQP) is the SH3-binding element. A compositionally biased stretch (low complexity) spans 459–474 (SQPTPSQHSAHPSSQP).

In terms of tissue distribution, ubiquitously expressed.

The protein resides in the cytoplasm. It is found in the cytoskeleton. In Homo sapiens (Human), this protein is Coiled-coil domain-containing protein 6 (CCDC6).